The following is a 488-amino-acid chain: NADH-ubiquinone oxidoreductase chain 2 (488 aa).

Transmembrane regions (helical) follow at residues 11-31 (MIKY…SISI), 38-58 (MMLL…LLTI), 74-94 (ELIT…ISMF), 106-126 (ITEE…ISME), 129-149 (NLIT…ILAL), 162-182 (LKYY…IVSI), 211-231 (IALI…HGWL), 239-259 (GMLM…IVLI), 271-291 (IEVI…VGTV), 299-319 (VIRF…LFFV), 331-351 (IYYL…IIGV), 376-396 (IGIS…FTNF), 412-434 (IYIT…NVVK), and 460-480 (IVGG…IISI).

The protein belongs to the complex I subunit 2 family.

It is found in the mitochondrion inner membrane. The catalysed reaction is a ubiquinone + NADH + 5 H(+)(in) = a ubiquinol + NAD(+) + 4 H(+)(out). Core subunit of the mitochondrial membrane respiratory chain NADH dehydrogenase (Complex I) that is believed to belong to the minimal assembly required for catalysis. Complex I functions in the transfer of electrons from NADH to the respiratory chain. The immediate electron acceptor for the enzyme is believed to be ubiquinone. This is NADH-ubiquinone oxidoreductase chain 2 (nad2) from Dictyostelium discoideum (Social amoeba).